Here is a 492-residue protein sequence, read N- to C-terminus: Transmembrane protease serine 2 (492 aa).

At 1-84 (MALNSGSPPA…TVCTSKTKKA (84 aa)) the chain is on the cytoplasmic side. A helical; Signal-anchor for type II membrane protein transmembrane segment spans residues 85-105 (LCITLTLGTFLVGAALAAGLL). Topologically, residues 106–492 (WKFMGSKCSN…WIYRQMRADG (387 aa)) are extracellular. 9 disulfide bridges follow: cysteine 113–cysteine 126, cysteine 120–cysteine 139, cysteine 133–cysteine 148, cysteine 172–cysteine 231, cysteine 185–cysteine 241, cysteine 244–cysteine 365, cysteine 281–cysteine 297, cysteine 410–cysteine 426, and cysteine 437–cysteine 465. The region spanning 118–148 (IECDSSGTCINPSNWCDGVSHCPGGEDENRC) is the LDL-receptor class A domain. The Ca(2+) site is built by asparagine 131, aspartate 134, valine 136, aspartate 144, and glutamate 145. The 94-residue stretch at 149–242 (VRLYGPNFIL…SKAVVSLRCI (94 aa)) folds into the SRCR domain. Residues asparagine 213 and asparagine 249 are each glycosylated (N-linked (GlcNAc...) asparagine). Residues 256 to 492 (IVGGESALPG…WIYRQMRADG (237 aa)) enclose the Peptidase S1 domain. Residues histidine 296 and aspartate 345 each act as charge relay system in the active site. Residues 340-470 (KTKNNDIALM…WGSGCAKAYR (131 aa)) form an HKU1-CoV S protein-binding region. Serine 441 acts as the Charge relay system in catalysis.

Belongs to the peptidase S1 family. In terms of assembly, the catalytically active form interacts with ACE2. Post-translationally, proteolytically processed; by an autocatalytic mechanism. Autocleavage induces active conformation. In terms of tissue distribution, expressed in several tissues that comprise large populations of epithelial cells with the highest level of transcripts measured in the prostate gland. Expressed in type II pneumocytes in the lung (at protein level). Expressed strongly in small intestine. Also expressed in colon, stomach and salivary gland. Coexpressed with ACE2 within lung type II pneumocytes, ileal absorptive enterocytes, intestinal epithelial cells, cornea, gallbladder and nasal goblet secretory cells.

It is found in the cell membrane. The protein localises to the secreted. It catalyses the reaction The enzyme cleaves angiotensin-converting enzyme 2 (EC 3.4.17.23) and cleaves influenzea A and B virus and coronavirus spike glycoproteins at arginine residues.. In terms of biological role, plasma membrane-anchored serine protease that cleaves at arginine residues. Participates in proteolytic cascades of relevance for the normal physiologic function of the prostate. Androgen-induced TMPRSS2 activates several substrates that include pro-hepatocyte growth factor/HGF, the protease activated receptor-2/F2RL1 or matriptase/ST14 leading to extracellular matrix disruption and metastasis of prostate cancer cells. In addition, activates trigeminal neurons and contribute to both spontaneous pain and mechanical allodynia. Functionally, (Microbial infection) Facilitates human coronaviruses SARS-CoV and SARS-CoV-2 infections via two independent mechanisms, proteolytic cleavage of ACE2 receptor which promotes viral uptake, and cleavage of coronavirus spike glycoproteins which activates the glycoprotein for host cell entry. The cleavage of SARS-COV2 spike glycoprotein occurs between the S2 and S2' site. Upon SARS-CoV-2 infection, increases syncytia formation by accelerating the fusion process. Proteolytically cleaves and activates the spike glycoproteins of human coronavirus 229E (HCoV-229E) and human coronavirus EMC (HCoV-EMC) and the fusion glycoproteins F0 of Sendai virus (SeV), human metapneumovirus (HMPV), human parainfluenza 1, 2, 3, 4a and 4b viruses (HPIV). Essential for spread and pathogenesis of influenza A virus (strains H1N1, H3N2 and H7N9); involved in proteolytic cleavage and activation of hemagglutinin (HA) protein which is essential for viral infectivity. Its function is as follows. (Microbial infection) Receptor for human coronavirus HKU1-CoV, acts synergistically with disialoside glycans to facilitate the entry of the virus. After binding to cell-surface disialoside glycans, the viral S protein interacts with the inactive form of TMPRSS2 and inhibits its protease activity. The chain is Transmembrane protease serine 2 from Homo sapiens (Human).